A 145-amino-acid chain; its full sequence is Ribonuclease H (145 aa).

One can recognise an RNase H type-1 domain in the interval 1–142; it reads MDTPVYLYTD…ADDLANRGAA (142 aa). 4 residues coordinate Mg(2+): D10, E48, D70, and D134.

It belongs to the RNase H family. Monomer. The cofactor is Mg(2+).

It is found in the cytoplasm. The enzyme catalyses Endonucleolytic cleavage to 5'-phosphomonoester.. In terms of biological role, endonuclease that specifically degrades the RNA of RNA-DNA hybrids. In Neisseria meningitidis serogroup C / serotype 2a (strain ATCC 700532 / DSM 15464 / FAM18), this protein is Ribonuclease H.